A 166-amino-acid chain; its full sequence is Regulator of ribonuclease activity A (166 aa).

It belongs to the RraA family. In terms of assembly, homotrimer. Binds to both RNA-binding sites in the C-terminal region of Rne and to RhlB.

It is found in the cytoplasm. Globally modulates RNA abundance by binding to RNase E (Rne) and regulating its endonucleolytic activity. Can modulate Rne action in a substrate-dependent manner by altering the composition of the degradosome. Modulates RNA-binding and helicase activities of the degradosome. This chain is Regulator of ribonuclease activity A, found in Mannheimia succiniciproducens (strain KCTC 0769BP / MBEL55E).